The primary structure comprises 365 residues: Eukaryotic translation initiation factor 3 subunit H (365 aa).

Positions 11–160 constitute an MPN domain; that stretch reads VKVEALVVMK…LRAFRLSPKF (150 aa).

This sequence belongs to the eIF-3 subunit H family. In terms of assembly, component of the eukaryotic translation initiation factor 3 (eIF-3) complex.

Its subcellular location is the cytoplasm. Component of the eukaryotic translation initiation factor 3 (eIF-3) complex, which is involved in protein synthesis of a specialized repertoire of mRNAs and, together with other initiation factors, stimulates binding of mRNA and methionyl-tRNAi to the 40S ribosome. The eIF-3 complex specifically targets and initiates translation of a subset of mRNAs involved in cell proliferation. In Aspergillus clavatus (strain ATCC 1007 / CBS 513.65 / DSM 816 / NCTC 3887 / NRRL 1 / QM 1276 / 107), this protein is Eukaryotic translation initiation factor 3 subunit H.